The chain runs to 251 residues: uncharacterized protein (251 aa).

This sequence to Anabaena PCC 7120 alr2406.

This is an uncharacterized protein from Synechocystis sp. (strain ATCC 27184 / PCC 6803 / Kazusa).